Reading from the N-terminus, the 235-residue chain is Motile sperm domain-containing protein 3 (235 aa).

Disordered stretches follow at residues 1 to 25 (MRRGAPQDQELVGPGPPGRGSRGAP) and 143 to 171 (ELQGQPDPAPRPGPPAGTPPPTARHFQEH). Positions 33–145 (PVLVFPPDLV…RAPAYPLELQ (113 aa)) constitute an MSP domain. The span at 149-164 (DPAPRPGPPAGTPPPT) shows a compositional bias: pro residues. Helical transmembrane passes span 180–200 (SFLLFLLTGIVSVAFLLLPLP) and 213–233 (VSLGQKLVAAYVLGLLTMVFL).

It is found in the membrane. The protein is Motile sperm domain-containing protein 3 (MOSPD3) of Homo sapiens (Human).